Consider the following 338-residue polypeptide: tRNA N6-adenosine threonylcarbamoyltransferase (338 aa).

Positions 111 and 115 each coordinate Fe cation. Substrate contacts are provided by residues 134 to 138 (LVSGG), aspartate 167, glycine 180, and asparagine 272. Residue aspartate 300 participates in Fe cation binding.

The protein belongs to the KAE1 / TsaD family. It depends on Fe(2+) as a cofactor.

It localises to the cytoplasm. It catalyses the reaction L-threonylcarbamoyladenylate + adenosine(37) in tRNA = N(6)-L-threonylcarbamoyladenosine(37) in tRNA + AMP + H(+). Functionally, required for the formation of a threonylcarbamoyl group on adenosine at position 37 (t(6)A37) in tRNAs that read codons beginning with adenine. Is involved in the transfer of the threonylcarbamoyl moiety of threonylcarbamoyl-AMP (TC-AMP) to the N6 group of A37, together with TsaE and TsaB. TsaD likely plays a direct catalytic role in this reaction. This chain is tRNA N6-adenosine threonylcarbamoyltransferase, found in Shewanella sp. (strain ANA-3).